The sequence spans 775 residues: Acylamino-acid-releasing enzyme 1 (775 aa).

Residues S627, D718, and H750 each act as charge relay system in the active site.

The protein belongs to the peptidase S9C family. As to quaternary structure, homotetramer.

The protein localises to the cytoplasm. It catalyses the reaction Cleavage of an N-acetyl or N-formyl amino acid from the N-terminus of a polypeptide.. In terms of biological role, catalyzes the hydrolysis of the N-terminal peptide bond of an N-acetylated peptide to generate an N-acetylated amino acid and a peptide with a free N-terminus. The polypeptide is Acylamino-acid-releasing enzyme 1 (Oryza sativa subsp. japonica (Rice)).